The following is a 425-amino-acid chain: MLDLKRIRTNFDAVAAKLKTRGVSEDTLTTLKALDEQRRALLVQTEELKAQRNIASAAIAQAKRQKKDASQQIADMQQLAANIKAIDAKLADIDQEITSIITVLPNTPHDSVPIGADEEDNVEIRRWGKPRQFDFDIKAHWDLGEALDILDWERGAKVTGARFLFYKNLGARLERALYNFMLDEHLKEGYQEIIPPYMVNHDSMFGTGQYPKFKEDTFELDGTSFVLIPTAEVPLTNYYRGDIIDGKELPIYFTAMSPSFRSEAGSAGRDTRGLIRLHQFHKVEMVKFAKPETSYEELEKMTANAENILQKLELPYRVLALCTGDMGFSAAKTYDLEVWIPAQNTYREISSCSNTEDFQARRAQIRYRDEADGKVKLLHTLNGSGLAVGRTVAAILENYQNEDGSVTIPEVLRPYMGGLELIKPR.

Position 230–232 (Thr-230–Glu-232) interacts with L-serine. Arg-261–Glu-263 serves as a coordination point for ATP. An L-serine-binding site is contributed by Glu-284. Residue Glu-348 to Ser-351 participates in ATP binding. Ser-384 contributes to the L-serine binding site.

The protein belongs to the class-II aminoacyl-tRNA synthetase family. Type-1 seryl-tRNA synthetase subfamily. Homodimer. The tRNA molecule binds across the dimer.

It localises to the cytoplasm. It catalyses the reaction tRNA(Ser) + L-serine + ATP = L-seryl-tRNA(Ser) + AMP + diphosphate + H(+). The catalysed reaction is tRNA(Sec) + L-serine + ATP = L-seryl-tRNA(Sec) + AMP + diphosphate + H(+). The protein operates within aminoacyl-tRNA biosynthesis; selenocysteinyl-tRNA(Sec) biosynthesis; L-seryl-tRNA(Sec) from L-serine and tRNA(Sec): step 1/1. In terms of biological role, catalyzes the attachment of serine to tRNA(Ser). Is also able to aminoacylate tRNA(Sec) with serine, to form the misacylated tRNA L-seryl-tRNA(Sec), which will be further converted into selenocysteinyl-tRNA(Sec). The polypeptide is Serine--tRNA ligase (Streptococcus equi subsp. zooepidemicus (strain H70)).